The primary structure comprises 459 residues: uncharacterized protein (459 aa).

At lysine 285 the chain carries N6-(pyridoxal phosphate)lysine.

It belongs to the class-III pyridoxal-phosphate-dependent aminotransferase family.

It localises to the cytoplasm. This is an uncharacterized protein from Schizosaccharomyces pombe (strain 972 / ATCC 24843) (Fission yeast).